We begin with the raw amino-acid sequence, 569 residues long: Sulfite reductase [NADPH] hemoprotein beta-component (569 aa).

[4Fe-4S] cluster-binding residues include C434, C440, C479, and C483. Residue C483 participates in siroheme binding.

The protein belongs to the nitrite and sulfite reductase 4Fe-4S domain family. In terms of assembly, alpha(8)-beta(8). The alpha component is a flavoprotein, the beta component is a hemoprotein. Requires siroheme as cofactor. [4Fe-4S] cluster is required as a cofactor.

The catalysed reaction is hydrogen sulfide + 3 NADP(+) + 3 H2O = sulfite + 3 NADPH + 4 H(+). It participates in sulfur metabolism; hydrogen sulfide biosynthesis; hydrogen sulfide from sulfite (NADPH route): step 1/1. Functionally, component of the sulfite reductase complex that catalyzes the 6-electron reduction of sulfite to sulfide. This is one of several activities required for the biosynthesis of L-cysteine from sulfate. The chain is Sulfite reductase [NADPH] hemoprotein beta-component from Staphylococcus saprophyticus subsp. saprophyticus (strain ATCC 15305 / DSM 20229 / NCIMB 8711 / NCTC 7292 / S-41).